The chain runs to 113 residues: Hydrogenase maturation factor HypA (113 aa).

Residue H2 participates in Ni(2+) binding. Zn(2+) contacts are provided by C73, C76, C89, and C92.

It belongs to the HypA/HybF family.

In terms of biological role, involved in the maturation of [NiFe] hydrogenases. Required for nickel insertion into the metal center of the hydrogenase. This is Hydrogenase maturation factor HypA from Bradyrhizobium sp. (strain ORS 278).